We begin with the raw amino-acid sequence, 598 residues long: Arginine--tRNA ligase (598 aa).

The 'HIGH' region signature appears at 139 to 149; sequence ANPTGPMHVGH.

Belongs to the class-I aminoacyl-tRNA synthetase family. In terms of assembly, monomer.

The protein resides in the cytoplasm. The enzyme catalyses tRNA(Arg) + L-arginine + ATP = L-arginyl-tRNA(Arg) + AMP + diphosphate. The sequence is that of Arginine--tRNA ligase from Bradyrhizobium sp. (strain ORS 278).